Consider the following 216-residue polypeptide: Holliday junction branch migration complex subunit RuvA (216 aa).

Positions 1-64 (MISFIKGVLI…EDAQQLYGFK (64 aa)) are domain I. The tract at residues 65 to 143 (SKVDKKVFQE…KMANEIYAQT (79 aa)) is domain II. The segment at 144–163 (SGTTTTSQDSQAQQAPTSVV) is flexible linker. Positions 164–216 (LANSIFNESVDALLALGYKQKDAEKMARSAMGDATTAAEVIRKALQGSIKSKG) are domain III.

The protein belongs to the RuvA family. In terms of assembly, homotetramer. Forms an RuvA(8)-RuvB(12)-Holliday junction (HJ) complex. HJ DNA is sandwiched between 2 RuvA tetramers; dsDNA enters through RuvA and exits via RuvB. An RuvB hexamer assembles on each DNA strand where it exits the tetramer. Each RuvB hexamer is contacted by two RuvA subunits (via domain III) on 2 adjacent RuvB subunits; this complex drives branch migration. In the full resolvosome a probable DNA-RuvA(4)-RuvB(12)-RuvC(2) complex forms which resolves the HJ.

Its subcellular location is the cytoplasm. Functionally, the RuvA-RuvB-RuvC complex processes Holliday junction (HJ) DNA during genetic recombination and DNA repair, while the RuvA-RuvB complex plays an important role in the rescue of blocked DNA replication forks via replication fork reversal (RFR). RuvA specifically binds to HJ cruciform DNA, conferring on it an open structure. The RuvB hexamer acts as an ATP-dependent pump, pulling dsDNA into and through the RuvAB complex. HJ branch migration allows RuvC to scan DNA until it finds its consensus sequence, where it cleaves and resolves the cruciform DNA. In Francisella tularensis subsp. holarctica (strain FTNF002-00 / FTA), this protein is Holliday junction branch migration complex subunit RuvA.